The sequence spans 360 residues: Protein Wnt-2 (360 aa).

The N-terminal stretch at 1-37 (MIPRRSCWLILLLNLLNVQSLLDASWWSTVAQLSTAL) is a signal peptide. 11 disulfide bridges follow: Cys-80–Cys-91, Cys-130–Cys-138, Cys-140–Cys-158, Cys-213–Cys-227, Cys-215–Cys-222, Cys-289–Cys-320, Cys-305–Cys-315, Cys-319–Cys-359, Cys-335–Cys-350, Cys-337–Cys-347, and Cys-342–Cys-343. Asn-90 is a glycosylation site (N-linked (GlcNAc...) asparagine). Ser-219 is lipidated: O-palmitoleoyl serine; by mom-1. Asn-352 is a glycosylation site (N-linked (GlcNAc...) asparagine).

It belongs to the Wnt family. Palmitoleoylation is required for efficient binding to frizzled receptors. Depalmitoleoylation leads to Wnt signaling pathway inhibition. In terms of tissue distribution, expressed in intestine, pharynx, anterior body wall muscle, vulva, some pharyngeal neurons and SMD head neurons. Expressed along the boundary between the intestine and muscle or hypodermis, but is also expressed in the hypodermis in cells including seam cells.

It localises to the secreted. Its subcellular location is the extracellular space. The protein resides in the extracellular matrix. In terms of biological role, ligand for members of the frizzled family of seven transmembrane receptors. Probable developmental protein. May be a signaling molecule which affects the development of discrete regions of tissues. Is likely to signal over only few cell diameters. Involved in the correct positioning of the developing nerve ring and in axon guidance of SIA and SIB neurons, probably by binding to tyrosine kinase receptor cam-1. In addition, regulates the positioning of some head neuronal cells, muscle arms associated with the nerve ring and the excretory pore. Together with Wnt ligand cwn-1, regulates the migration of CAN, ALM, BDU and HSN neurons during embryogenesis, the migration of QL and QR neuroblast descendants during larval development, and polarity of ALM neurons. May act through the wnt receptor cfz-2 to regulate QR neuroblast descendant migration, and to direct ALM migration. Also plays a role in axon growth and guidance in HSN and male CP neurons. In addition, together with wnt ligand cwn-1, negatively regulates developmental neurite pruning of AIM neurons probably by acting as a ligand for receptor tyrosine kinase cam-1. Through the cam-1 receptor also probably regulates the outgrowth of neurites from RME GABAergic motor neurons. May act redundantly with other Wnt ligands such as cwn-1 and mom-2 to control seam cell polarity. The sequence is that of Protein Wnt-2 from Caenorhabditis elegans.